Here is a 704-residue protein sequence, read N- to C-terminus: Pentatricopeptide repeat-containing protein At4g28010 (704 aa).

PPR repeat units follow at residues 71 to 105, 106 to 140, 141 to 175, 176 to 210, 211 to 245, 246 to 280, 281 to 315, 316 to 350, 351 to 385, 386 to 416, 423 to 453, 458 to 492, 493 to 527, 528 to 562, 563 to 597, 598 to 632, and 633 to 667; these read LAFA…DTFI, NFVS…GFAF, NVYN…SLMP, DVFS…GCSW, SLVT…GLEA, DLVV…GDSP, CAIT…GVRP, NVYT…DEEP, NAVT…RTRP, DNIT…MLKD, DVIS…LVEK, DRVT…KIVR, NSDT…ELQP, SVFD…NNFP, DVVS…GLSP, DLFT…GFEP, and DAHI…DIVL.

Belongs to the PPR family. P subfamily.

In Arabidopsis thaliana (Mouse-ear cress), this protein is Pentatricopeptide repeat-containing protein At4g28010.